A 142-amino-acid polypeptide reads, in one-letter code: Small ribosomal subunit protein uS12 (142 aa).

This sequence belongs to the universal ribosomal protein uS12 family. Part of the 30S ribosomal subunit.

In terms of biological role, with S4 and S5 plays an important role in translational accuracy. Located at the interface of the 30S and 50S subunits. The polypeptide is Small ribosomal subunit protein uS12 (Methanothrix thermoacetophila (strain DSM 6194 / JCM 14653 / NBRC 101360 / PT) (Methanosaeta thermophila)).